Consider the following 147-residue polypeptide: uncharacterized protein (147 aa).

An HTH marR-type domain is found at 1–137; that stretch reads MRDNTIGSLI…LYELMTKVHK (137 aa). The H-T-H motif DNA-binding region spans 53-76; that stretch reads QMELAEKVTVTQGGISRMLTRLEK.

This is an uncharacterized protein from Bacillus cereus (strain ATCC 10987 / NRS 248).